Reading from the N-terminus, the 377-residue chain is N-acetyldiaminopimelate deacetylase (377 aa).

D69 is a catalytic residue. The active-site Proton acceptor is E128.

It belongs to the peptidase M20A family. N-acetyldiaminopimelate deacetylase subfamily.

The enzyme catalyses N-acetyl-(2S,6S)-2,6-diaminopimelate + H2O = (2S,6S)-2,6-diaminopimelate + acetate. Its pathway is amino-acid biosynthesis; L-lysine biosynthesis via DAP pathway; LL-2,6-diaminopimelate from (S)-tetrahydrodipicolinate (acetylase route): step 3/3. Catalyzes the conversion of N-acetyl-diaminopimelate to diaminopimelate and acetate. The protein is N-acetyldiaminopimelate deacetylase of Streptococcus sanguinis (strain SK36).